The primary structure comprises 236 residues: Sugar fermentation stimulation protein homolog (236 aa).

This sequence belongs to the SfsA family.

This chain is Sugar fermentation stimulation protein homolog, found in Pseudomonas fluorescens (strain SBW25).